The primary structure comprises 1028 residues: Beta-galactosidase (1028 aa).

Substrate is bound by residues N104 and D203. D203 contacts Na(+). Positions 418, 420, and 463 each coordinate Mg(2+). Substrate is bound by residues E463 and 539-542; that span reads EYAH. The Proton donor role is filled by E463. The active-site Nucleophile is E539. Residue N599 coordinates Mg(2+). Residues F603 and N606 each coordinate Na(+). Substrate is bound by residues N606 and W1003.

Belongs to the glycosyl hydrolase 2 family. Homotetramer. Requires Mg(2+) as cofactor. Na(+) serves as cofactor.

The enzyme catalyses Hydrolysis of terminal non-reducing beta-D-galactose residues in beta-D-galactosides.. The chain is Beta-galactosidase from Enterobacter cloacae.